The chain runs to 367 residues: Glutamate 5-kinase (367 aa).

Lysine 9 contacts ATP. The substrate site is built by serine 49, aspartate 136, and asparagine 148. ATP-binding positions include 168-169 (TD) and 210-216 (TGGMKSK). Positions 276–350 (SGQIEVDAGA…GMQSQDIQVR (75 aa)) constitute a PUA domain.

This sequence belongs to the glutamate 5-kinase family.

The protein resides in the cytoplasm. The catalysed reaction is L-glutamate + ATP = L-glutamyl 5-phosphate + ADP. It functions in the pathway amino-acid biosynthesis; L-proline biosynthesis; L-glutamate 5-semialdehyde from L-glutamate: step 1/2. Functionally, catalyzes the transfer of a phosphate group to glutamate to form L-glutamate 5-phosphate. The sequence is that of Glutamate 5-kinase from Bacillus cereus (strain ATCC 14579 / DSM 31 / CCUG 7414 / JCM 2152 / NBRC 15305 / NCIMB 9373 / NCTC 2599 / NRRL B-3711).